The sequence spans 341 residues: Uroporphyrinogen decarboxylase (341 aa).

Substrate contacts are provided by residues 26–30 (RQAGR), Asp75, Tyr150, Ser205, and His318.

This sequence belongs to the uroporphyrinogen decarboxylase family. Homodimer.

The protein resides in the cytoplasm. It catalyses the reaction uroporphyrinogen III + 4 H(+) = coproporphyrinogen III + 4 CO2. It functions in the pathway porphyrin-containing compound metabolism; protoporphyrin-IX biosynthesis; coproporphyrinogen-III from 5-aminolevulinate: step 4/4. Functionally, catalyzes the decarboxylation of four acetate groups of uroporphyrinogen-III to yield coproporphyrinogen-III. This is Uroporphyrinogen decarboxylase from Thermus thermophilus (strain ATCC 27634 / DSM 579 / HB8).